Consider the following 199-residue polypeptide: MITFTKPLSKLIGHFEKFPGIGPRTAQRLALFILKQPESSIRDFSKALLEAHSNVGHCKKCFNLTSEEECEICRNTERNQKIICVVAETKDLLALERSREFKGTYHVIGGLISPMDSISPELLEIRSLVERVSKSDIDEIILALTPSVEGDTTSLYIGKLLTPFTKVTRIAYGLPMGSELEYVDEVTLARALEGRTNLI.

Residues 58–73 form a C4-type zinc finger; it reads CKKCFNLTSEEECEIC. In terms of domain architecture, Toprim spans 81–175; that stretch reads KIICVVAETK…KVTRIAYGLP (95 aa).

This sequence belongs to the RecR family.

May play a role in DNA repair. It seems to be involved in an RecBC-independent recombinational process of DNA repair. It may act with RecF and RecO. In Prochlorococcus marinus subsp. pastoris (strain CCMP1986 / NIES-2087 / MED4), this protein is Recombination protein RecR.